A 149-amino-acid chain; its full sequence is MRRVLLATLMAALPAAAMAADAEHVVEARKGYFSLVALEFGPLAAMAKGEMPYDAAAAKAHASDLVTLTKYDPSDLYAPGTSADDVKGTAAKAAIWQDADGFQAKGMAFFEAVAALEPAAGAGQKELAAAVGKVGGTCKSCHDDFRVKR.

Positions 1–19 (MRRVLLATLMAALPAAAMA) are cleaved as a signal peptide. Residues Arg29, Thr89, Ala90, Cys138, Cys141, and His142 each coordinate heme c.

As to quaternary structure, monomer and homodimer. Binds 1 heme c group covalently per subunit.

In terms of biological role, cytochrome c' is the most widely occurring bacterial c-type cytochrome. Cytochromes c' are high-spin proteins and the heme has no sixth ligand. Their exact function is not known. This is Cytochrome c' (cycP) from Cereibacter sphaeroides (strain ATCC 17023 / DSM 158 / JCM 6121 / CCUG 31486 / LMG 2827 / NBRC 12203 / NCIMB 8253 / ATH 2.4.1.) (Rhodobacter sphaeroides).